Here is a 464-residue protein sequence, read N- to C-terminus: Isthmin-1 (464 aa).

An N-terminal signal peptide occupies residues 1-29 (MVRLAAELLLLLGLLLLTLHITVLRGSGA). Residue Asn-39 is glycosylated (N-linked (GlcNAc...) asparagine). Disordered regions lie at residues 50 to 98 (NVGS…LQRD), 135 to 155 (PDSEADKDQHPENKPSWSVPS), and 173 to 219 (SGDQ…STDG). The span at 51–63 (VGSDTTSETSFSL) shows a compositional bias: polar residues. Basic and acidic residues-rich tracts occupy residues 66–76 (EAPREHLDHQA) and 138–147 (EADKDQHPEN). One can recognise a TSP type-1 domain in the interval 218-262 (DGEGDWSLWSVCSVTCGNGNQKRTRSCGYACTATESRTCDRPNCP). 3 disulfide bridges follow: Cys-229–Cys-256, Cys-233–Cys-261, and Cys-244–Cys-248. Residues 289–452 (LFEVDTDSCE…QKCTESPSDE (164 aa)) form the AMOP domain.

This sequence belongs to the isthmin family. As to quaternary structure, interacts with integrin ITGAV/ITGB5.

The protein resides in the secreted. In terms of biological role, acts as an angiogenesis inhibitor. The sequence is that of Isthmin-1 (ISM1) from Homo sapiens (Human).